We begin with the raw amino-acid sequence, 410 residues long: Ribonucleoside-diphosphate reductase small chain (410 aa).

Residues 1-20 (MSVQTSPSKQVTSGIQNLNM) are compositionally biased toward polar residues. 2 disordered regions span residues 1–43 (MSVQ…DEDL) and 55–78 (NANK…ANEP). Composition is skewed to basic and acidic residues over residues 23 to 43 (PAKK…DEDL) and 55 to 65 (NANKKAAEAKK). Fe cation contacts are provided by Asp-146, Glu-177, and His-180. Tyr-184 is an active-site residue. Fe cation contacts are provided by Glu-240, Glu-274, and His-277.

This sequence belongs to the ribonucleoside diphosphate reductase small chain family. Heterodimer of a large and a small subunit. Fe cation is required as a cofactor.

The catalysed reaction is a 2'-deoxyribonucleoside 5'-diphosphate + [thioredoxin]-disulfide + H2O = a ribonucleoside 5'-diphosphate + [thioredoxin]-dithiol. Provides the precursors necessary for DNA synthesis. Catalyzes the biosynthesis of deoxyribonucleotides from the corresponding ribonucleotides. The sequence is that of Ribonucleoside-diphosphate reductase small chain (rnr-2) from Neurospora crassa (strain ATCC 24698 / 74-OR23-1A / CBS 708.71 / DSM 1257 / FGSC 987).